The primary structure comprises 598 residues: Kinetochore-associated protein KNL-2 homolog (598 aa).

Residues 19–111 (VVLRDWWLIK…IFGFPPCWER (93 aa)) enclose the SANTA domain. Basic and acidic residues-rich tracts occupy residues 335 to 344 (AKSSKPEKKG) and 371 to 381 (KSAENKRKIDA). Disordered regions lie at residues 335–403 (AKSS…NNAK), 445–500 (KESL…EEAE), 520–542 (PEKKVKQQKTNAASTDSLGQKRS), and 572–598 (KDGSETNSAPSKGKGSDSRKRRNLKIK). Over residues 383–392 (KLQSPTSNVA) the composition is skewed to polar residues. The span at 527-539 (QKTNAASTDSLGQ) shows a compositional bias: polar residues. Positions 538-572 (GQKRSRSGRVLVSSLEFWRNQIPVYDMDRNLIQVK) are required for localization at centromeres.

The protein belongs to the KNL2 family. In terms of tissue distribution, expressed in shoot apical meristem, leaf primordia, basal parts of emerging leaves, inflorescence meristems, young inflorescences, developing flower buds, developing sepals and pistils, styles and young siliques.

It localises to the nucleus. The protein localises to the nucleoplasm. Its subcellular location is the nuclear body. The protein resides in the nucleolus. It is found in the chromosome. It localises to the centromere. Involved in recognition of centromeres and centromeric localization of the centromere-specific histone CENH3. Required for normal progression of mitosis and meiosis. May play a role in the determination of the epigenetic status of centromeres. Binds DNA and RNA in vitro. In Arabidopsis thaliana (Mouse-ear cress), this protein is Kinetochore-associated protein KNL-2 homolog.